Reading from the N-terminus, the 82-residue chain is uncharacterized protein (82 aa).

Residues 11–82 (NVGIYVRVST…HIEQGIMTHC (72 aa)) enclose the Resolvase/invertase-type recombinase catalytic domain. Ser19 serves as the catalytic O-(5'-phospho-DNA)-serine intermediate.

The protein belongs to the site-specific recombinase resolvase family.

This is an uncharacterized protein from Bacillus phage phi105 (Bacteriophage phi-105).